Reading from the N-terminus, the 692-residue chain is Elongation factor G (692 aa).

The region spanning 8-283 is the tr-type G domain; sequence DRYRNIGIMA…AVVDFLPSPL (276 aa). GTP is bound by residues 17–24, 81–85, and 135–138; these read AHIDAGKT, DTPGH, and NKMD.

The protein belongs to the TRAFAC class translation factor GTPase superfamily. Classic translation factor GTPase family. EF-G/EF-2 subfamily.

It localises to the cytoplasm. Catalyzes the GTP-dependent ribosomal translocation step during translation elongation. During this step, the ribosome changes from the pre-translocational (PRE) to the post-translocational (POST) state as the newly formed A-site-bound peptidyl-tRNA and P-site-bound deacylated tRNA move to the P and E sites, respectively. Catalyzes the coordinated movement of the two tRNA molecules, the mRNA and conformational changes in the ribosome. The polypeptide is Elongation factor G (Rhodospirillum rubrum (strain ATCC 11170 / ATH 1.1.1 / DSM 467 / LMG 4362 / NCIMB 8255 / S1)).